A 201-amino-acid polypeptide reads, in one-letter code: Imidazoleglycerol-phosphate dehydratase (201 aa).

The protein belongs to the imidazoleglycerol-phosphate dehydratase family.

Its subcellular location is the cytoplasm. The enzyme catalyses D-erythro-1-(imidazol-4-yl)glycerol 3-phosphate = 3-(imidazol-4-yl)-2-oxopropyl phosphate + H2O. Its pathway is amino-acid biosynthesis; L-histidine biosynthesis; L-histidine from 5-phospho-alpha-D-ribose 1-diphosphate: step 6/9. This Synechococcus sp. (strain CC9311) protein is Imidazoleglycerol-phosphate dehydratase.